Reading from the N-terminus, the 334-residue chain is G-protein coupled receptor 12 (334 aa).

Over 1-48 (MNEDPKVNLSGLPRDCIDAGAPENISAAVPSQGSVAESEPELVVNPWD) the chain is Extracellular. Residues Asn8 and Asn24 are each glycosylated (N-linked (GlcNAc...) asparagine). A helical membrane pass occupies residues 49-69 (IVLCSSGTLICCENAVVVLII). The Cytoplasmic segment spans residues 70-78 (FHSPSLRAP). A helical membrane pass occupies residues 79-99 (MFLLIGSLALADLLAGLGLII). At 100–113 (NFVFAYLLQSEATK) the chain is on the extracellular side. The chain crosses the membrane as a helical span at residues 114–134 (LVTIGLIVASFSASVCSLLAI). At 135–158 (TVDRYLSLYYALTYHSERTVTFTY) the chain is on the cytoplasmic side. The chain crosses the membrane as a helical span at residues 159-179 (VMLVMLWGTSICLGLLPVMGW). Topologically, residues 180-199 (NCLRDESTCSVVRPLTKNNA) are extracellular. The chain crosses the membrane as a helical span at residues 200–220 (AILSISFLFMFALMLQLYIQI). At 221–252 (CKIVMRHAHQIALQHHFLATSHYVTTRKGVST) the chain is on the cytoplasmic side. A helical transmembrane segment spans residues 253-273 (LALILGTFAACWMPFTLYSLI). Topologically, residues 274–282 (ADYTYPSIY) are extracellular. Residues 283 to 303 (TYATLLPATYNSIINPVIYAF) form a helical membrane-spanning segment. Residues 304–334 (RNQEIQKALCLICCGCIPSSLSQRARSPSDV) are Cytoplasmic-facing. The S-palmitoyl cysteine moiety is linked to residue Cys317. Ser330 and Ser332 each carry phosphoserine.

It belongs to the G-protein coupled receptor 1 family. Expressed predominantly in the forebrain and a lesser extent in the hindbrain. Lower expression in the liver.

Its subcellular location is the cell membrane. Receptor with constitutive G(s) signaling activity that stimulates cyclic AMP production. Promotes neurite outgrowth and blocks myelin inhibition in neurons. The polypeptide is G-protein coupled receptor 12 (Gpr12) (Mus musculus (Mouse)).